Reading from the N-terminus, the 411-residue chain is Lissencephaly-1 homolog (411 aa).

Residues 9 to 41 (QREELNQAIADYLGSNGYADSLETFRKEADLST) form the LisH domain. Positions 56-83 (TSVIRLQKKVMELEAKLTEAEKEVIEGA) form a coiled coil. WD repeat units follow at residues 106–147 (GHRA…RSLK), 148–187 (GHTD…ECIK), 191–230 (GHDH…CVKT), 233–272 (GHRE…CKVE), 275–334 (DHEH…CLLT), 337–376 (GHDN…CMKT), and 379–411 (AHQH…WECR).

It belongs to the WD repeat LIS1/nudF family.

The protein resides in the cytoplasm. The protein localises to the cytoskeleton. Its subcellular location is the microtubule organizing center. It is found in the centrosome. In terms of biological role, positively regulates the activity of the minus-end directed microtubule motor protein dynein. May enhance dynein-mediated microtubule sliding by targeting dynein to the microtubule plus end. Required for several dynein- and microtubule-dependent processes. This Drosophila sechellia (Fruit fly) protein is Lissencephaly-1 homolog.